Here is a 98-residue protein sequence, read N- to C-terminus: NADH-ubiquinone oxidoreductase chain 4L (98 aa).

A run of 3 helical transmembrane segments spans residues 1-21, 26-46, and 61-81; these read MTPTHMNITLAFTISLLGMLI, LMASLLCLEGMMMSLFIMTAV, and IIMLVFAACEAAVGLALLVSI.

This sequence belongs to the complex I subunit 4L family. In terms of assembly, core subunit of respiratory chain NADH dehydrogenase (Complex I) which is composed of 45 different subunits.

Its subcellular location is the mitochondrion inner membrane. The enzyme catalyses a ubiquinone + NADH + 5 H(+)(in) = a ubiquinol + NAD(+) + 4 H(+)(out). In terms of biological role, core subunit of the mitochondrial membrane respiratory chain NADH dehydrogenase (Complex I) which catalyzes electron transfer from NADH through the respiratory chain, using ubiquinone as an electron acceptor. Part of the enzyme membrane arm which is embedded in the lipid bilayer and involved in proton translocation. The polypeptide is NADH-ubiquinone oxidoreductase chain 4L (MT-ND4L) (Papio hamadryas (Hamadryas baboon)).